Consider the following 1004-residue polypeptide: Kinesin-like protein KIN-14R (1004 aa).

Disordered regions lie at residues 1–21 (MEEE…RIGD), 61–90 (PYVD…MQHD), and 110–169 (ELFS…ATMG). Residues 63–75 (VDDDDDGNSEEEN) are compositionally biased toward acidic residues. Positions 115-125 (PSPPQGPPSPS) are enriched in pro residues. 2 coiled-coil regions span residues 189 to 230 (CGQL…AQAS) and 266 to 338 (LNDL…LYNK). One can recognise a Kinesin motor domain in the interval 345–671 (NIRVFCRCRP…LNFASRVRGI (327 aa)). Position 428-435 (428-435 (GQTGTGKT)) interacts with ATP. A coiled-coil region spans residues 691 to 742 (MAGRAKQDSKNKDAQIKSMEETIQSLEAKNKAKDLLTMNLQEKIKELEAQLL). 2 disordered regions span residues 759–791 (DHLH…STAE) and 946–1004 (SGRR…RQLN). The span at 948 to 958 (RRAGAGVAGTT) shows a compositional bias: low complexity. The segment covering 995–1004 (NNGTSLRQLN) has biased composition (polar residues).

Belongs to the TRAFAC class myosin-kinesin ATPase superfamily. Kinesin family. KIN-14 subfamily.

The sequence is that of Kinesin-like protein KIN-14R from Oryza sativa subsp. japonica (Rice).